A 302-amino-acid chain; its full sequence is Glycine--tRNA ligase alpha subunit (302 aa).

It belongs to the class-II aminoacyl-tRNA synthetase family. Tetramer of two alpha and two beta subunits.

The protein localises to the cytoplasm. The catalysed reaction is tRNA(Gly) + glycine + ATP = glycyl-tRNA(Gly) + AMP + diphosphate. This Edwardsiella ictaluri (strain 93-146) protein is Glycine--tRNA ligase alpha subunit.